A 292-amino-acid polypeptide reads, in one-letter code: MRDYIELTKPRITWLILMSTGIGYFFGLPQASNWLTFLKNIDLLRLLHTIIGTGLIASGTAALNQWYEREGDLKMHRTAGRPLPSGRLIAGRALAFGVALSIAGFVELWLGVNLLSAGIGAFTLASYLFLYTPMKRRTWWSTTVGAIPGAMPPVIGFAAAAGGLTRESWVLFAILFLWQFPHFYSIAWMYKEDYARAGIQMLPVVDPDCRSTARQIVIYGIALIPVSLVPALLGMSGRLYLVGALLLGLWFLYSGVRVALERTLVRARGVLITSVLYLPLIYGLMLLDRPGL.

The next 9 helical transmembrane spans lie at 12-32 (ITWL…PQAS), 43-63 (LLRL…TAAL), 94-114 (LAFG…GVNL), 115-135 (LSAG…TPMK), 144-164 (VGAI…AGGL), 169-189 (WVLF…IAWM), 216-236 (IVIY…LGMS), 239-259 (LYLV…VRVA), and 267-287 (ARGV…LMLL).

The protein belongs to the UbiA prenyltransferase family. Protoheme IX farnesyltransferase subfamily.

It is found in the cell inner membrane. It catalyses the reaction heme b + (2E,6E)-farnesyl diphosphate + H2O = Fe(II)-heme o + diphosphate. Its pathway is porphyrin-containing compound metabolism; heme O biosynthesis; heme O from protoheme: step 1/1. Converts heme B (protoheme IX) to heme O by substitution of the vinyl group on carbon 2 of heme B porphyrin ring with a hydroxyethyl farnesyl side group. This is Protoheme IX farnesyltransferase from Solibacter usitatus (strain Ellin6076).